The primary structure comprises 201 residues: uncharacterized protein (201 aa).

Coiled-coil stretches lie at residues 3–43 and 76–120; these read YMDD…EVYK and TGQV…AKTK.

This is an uncharacterized protein from Archaeoglobus fulgidus (strain ATCC 49558 / DSM 4304 / JCM 9628 / NBRC 100126 / VC-16).